Here is a 153-residue protein sequence, read N- to C-terminus: Ribosome maturation factor RimP (153 aa).

It belongs to the RimP family.

It localises to the cytoplasm. In terms of biological role, required for maturation of 30S ribosomal subunits. In Coxiella burnetii (strain Dugway 5J108-111), this protein is Ribosome maturation factor RimP.